Reading from the N-terminus, the 481-residue chain is Velvet complex subunit B (481 aa).

Disordered stretches follow at residues 1 to 157 (MNSA…YSKI) and 241 to 339 (GTGA…NGYG). 3 stretches are compositionally biased toward pro residues: residues 36-45 (HPPPPLPPPS), 53-62 (PPLPPPPSAP), and 96-112 (PYAP…QYPR). A Velvet domain is found at 160–464 (GSGWKYSLDV…ANQGIKIPIR (305 aa)). Low complexity-rich tracts occupy residues 241–255 (GTGA…TYSS) and 293–325 (QQSY…SAEP).

It belongs to the velvet family. VelB subfamily. In terms of assembly, component of the heterotrimeric velvet complex composed of laeA, veA and velB; VeA acting as a bridging protein between laeA and velB. Forms a heterodimeric complex with vosA; the formation of the velB-vosA complex is light-dependent.

The protein resides in the nucleus. It localises to the cytoplasm. Component of the velvet transcription factor complex that controls sexual/asexual developmental ratio in response to light, promoting sexual development in the darkness while stimulating asexual sporulation under illumination. The velvet complex acts as a global regulator for secondary metabolite gene expression. Component of the velB-VosA heterodimeric complex that plays a dual role in activating genes associated with spore maturation and repressing certain development-associated genes. The velB-VosA complex binds DNA through the DNA-binding domain of vosA that recognizes an 11-nucleotide consensus sequence 5'-CTGGCCGCGGC-3' consisting of two motifs in the promoters of key developmental regulatory genes. Controls the biosynthetic gene cluster for beauvericin, a depsipeptide mycotoxin that functions as a virulence determinant. Also regulates chromatin structure and transcription of siderophore biosynthetic genes and is required for infection of tomato plants. The chain is Velvet complex subunit B from Fusarium oxysporum f. sp. lycopersici (strain 4287 / CBS 123668 / FGSC 9935 / NRRL 34936) (Fusarium vascular wilt of tomato).